The sequence spans 294 residues: 4-hydroxy-tetrahydrodipicolinate synthase (294 aa).

Thr-47 is a binding site for pyruvate. Residue Tyr-135 is the Proton donor/acceptor of the active site. Lys-163 acts as the Schiff-base intermediate with substrate in catalysis. Pyruvate is bound at residue Ile-205.

This sequence belongs to the DapA family. As to quaternary structure, homotetramer; dimer of dimers.

It localises to the cytoplasm. It catalyses the reaction L-aspartate 4-semialdehyde + pyruvate = (2S,4S)-4-hydroxy-2,3,4,5-tetrahydrodipicolinate + H2O + H(+). It functions in the pathway amino-acid biosynthesis; L-lysine biosynthesis via DAP pathway; (S)-tetrahydrodipicolinate from L-aspartate: step 3/4. Catalyzes the condensation of (S)-aspartate-beta-semialdehyde [(S)-ASA] and pyruvate to 4-hydroxy-tetrahydrodipicolinate (HTPA). This chain is 4-hydroxy-tetrahydrodipicolinate synthase, found in Rickettsia prowazekii (strain Madrid E).